The primary structure comprises 251 residues: Putative fatty acid elongase DDB_G0274669 (251 aa).

5 helical membrane passes run 51 to 71 (FQII…IKFL), 82 to 102 (FISI…CVGV), 135 to 155 (WSYI…IIVL), 177 to 197 (YITM…VLHV), and 211 to 231 (AFAA…KFFV).

The protein belongs to the ELO family.

The protein localises to the membrane. It catalyses the reaction a very-long-chain acyl-CoA + malonyl-CoA + H(+) = a very-long-chain 3-oxoacyl-CoA + CO2 + CoA. Functionally, could be implicated in synthesis of very long chain fatty acids. This Dictyostelium discoideum (Social amoeba) protein is Putative fatty acid elongase DDB_G0274669.